Consider the following 315-residue polypeptide: Methenyltetrahydromethanopterin cyclohydrolase (315 aa).

It belongs to the MCH family.

It is found in the cytoplasm. The enzyme catalyses 5,10-methenyl-5,6,7,8-tetrahydromethanopterin + H2O = N(5)-formyl-5,6,7,8-tetrahydromethanopterin + H(+). It functions in the pathway one-carbon metabolism; methanogenesis from CO(2); 5,10-methenyl-5,6,7,8-tetrahydromethanopterin from CO(2): step 3/3. Catalyzes the reversible interconversion of 5-formyl-H(4)MPT to methenyl-H(4)MPT(+). This Methanosphaerula palustris (strain ATCC BAA-1556 / DSM 19958 / E1-9c) protein is Methenyltetrahydromethanopterin cyclohydrolase.